A 264-amino-acid chain; its full sequence is Putative [LysW]-aminoadipate/[LysW]-glutamate kinase (264 aa).

Substrate-binding positions include 34–35 (GG), R61, and N169.

Belongs to the acetylglutamate kinase family. LysZ subfamily.

The protein resides in the cytoplasm. The catalysed reaction is [amino-group carrier protein]-C-terminal-N-(1,4-dicarboxybutan-1-yl)-L-glutamine + ATP = [amino-group carrier protein]-C-terminal-N-(1-carboxy-5-phosphooxy-5-oxopentan-1-yl)-L-glutamine + ADP. It catalyses the reaction [amino-group carrier protein]-C-terminal-gamma-(L-glutamyl)-L-glutamate + ATP = [amino-group carrier protein]-C-terminal-gamma-(5-phospho-L-glutamyl)-L-glutamate + ADP. It functions in the pathway amino-acid biosynthesis; L-lysine biosynthesis via AAA pathway; L-lysine from L-alpha-aminoadipate (Thermus route): step 2/5. Its pathway is amino-acid biosynthesis; L-arginine biosynthesis. Functionally, involved in both the arginine and lysine biosynthetic pathways. Phosphorylates the LysW-bound precursors glutamate (for arginine biosynthesis), respectively alpha-aminoadipate (for lysine biosynthesis). This chain is Putative [LysW]-aminoadipate/[LysW]-glutamate kinase, found in Ignicoccus hospitalis (strain KIN4/I / DSM 18386 / JCM 14125).